The sequence spans 1125 residues: Transcription-repair-coupling factor (1125 aa).

The Helicase ATP-binding domain maps to 597 to 758 (DMMSFKVMDR…LIKLRDISVL (162 aa)). 610-617 (GDVGFGKT) provides a ligand contact to ATP. The DEEQ box motif lies at 711-714 (DEEQ). The Helicase C-terminal domain occupies 774–933 (SFSELLIKHA…GFKIAMKDME (160 aa)).

It in the N-terminal section; belongs to the UvrB family. This sequence in the C-terminal section; belongs to the helicase family. RecG subfamily.

It is found in the cytoplasm. Functionally, couples transcription and DNA repair by recognizing RNA polymerase (RNAP) stalled at DNA lesions. Mediates ATP-dependent release of RNAP and its truncated transcript from the DNA, and recruitment of nucleotide excision repair machinery to the damaged site. The protein is Transcription-repair-coupling factor of Borreliella burgdorferi (strain ATCC 35210 / DSM 4680 / CIP 102532 / B31) (Borrelia burgdorferi).